The primary structure comprises 546 residues: Chaperonin GroEL (546 aa).

ATP is bound by residues T29–P32, K50, D86–T90, G414, and D492.

Belongs to the chaperonin (HSP60) family. In terms of assembly, forms a cylinder of 14 subunits composed of two heptameric rings stacked back-to-back. Interacts with the co-chaperonin GroES.

It is found in the cytoplasm. The enzyme catalyses ATP + H2O + a folded polypeptide = ADP + phosphate + an unfolded polypeptide.. In terms of biological role, together with its co-chaperonin GroES, plays an essential role in assisting protein folding. The GroEL-GroES system forms a nano-cage that allows encapsulation of the non-native substrate proteins and provides a physical environment optimized to promote and accelerate protein folding. This is Chaperonin GroEL from Helicobacter pylori (strain HPAG1).